The primary structure comprises 447 residues: Phosphoglucosamine mutase (447 aa).

Residue serine 102 is the Phosphoserine intermediate of the active site. Mg(2+) is bound by residues serine 102, aspartate 241, aspartate 243, and aspartate 245. The residue at position 102 (serine 102) is a Phosphoserine.

Belongs to the phosphohexose mutase family. It depends on Mg(2+) as a cofactor. In terms of processing, activated by phosphorylation.

The catalysed reaction is alpha-D-glucosamine 1-phosphate = D-glucosamine 6-phosphate. Its function is as follows. Catalyzes the conversion of glucosamine-6-phosphate to glucosamine-1-phosphate. The sequence is that of Phosphoglucosamine mutase from Pseudomonas savastanoi pv. phaseolicola (strain 1448A / Race 6) (Pseudomonas syringae pv. phaseolicola (strain 1448A / Race 6)).